We begin with the raw amino-acid sequence, 156 residues long: Cyanate hydratase (156 aa).

Active-site residues include Arg96, Glu99, and Ser122.

It belongs to the cyanase family.

The catalysed reaction is cyanate + hydrogencarbonate + 3 H(+) = NH4(+) + 2 CO2. Its function is as follows. Catalyzes the reaction of cyanate with bicarbonate to produce ammonia and carbon dioxide. This is Cyanate hydratase from Pseudomonas fluorescens (strain ATCC BAA-477 / NRRL B-23932 / Pf-5).